The primary structure comprises 556 residues: 2-succinyl-5-enolpyruvyl-6-hydroxy-3-cyclohexene-1-carboxylate synthase (556 aa).

It belongs to the TPP enzyme family. MenD subfamily. Homodimer. The cofactor is Mg(2+). Mn(2+) is required as a cofactor. It depends on thiamine diphosphate as a cofactor.

It catalyses the reaction isochorismate + 2-oxoglutarate + H(+) = 5-enolpyruvoyl-6-hydroxy-2-succinyl-cyclohex-3-ene-1-carboxylate + CO2. Its pathway is quinol/quinone metabolism; 1,4-dihydroxy-2-naphthoate biosynthesis; 1,4-dihydroxy-2-naphthoate from chorismate: step 2/7. It functions in the pathway quinol/quinone metabolism; menaquinone biosynthesis. Functionally, catalyzes the thiamine diphosphate-dependent decarboxylation of 2-oxoglutarate and the subsequent addition of the resulting succinic semialdehyde-thiamine pyrophosphate anion to isochorismate to yield 2-succinyl-5-enolpyruvyl-6-hydroxy-3-cyclohexene-1-carboxylate (SEPHCHC). This Salmonella typhi protein is 2-succinyl-5-enolpyruvyl-6-hydroxy-3-cyclohexene-1-carboxylate synthase.